A 766-amino-acid polypeptide reads, in one-letter code: Flocculation suppression protein (766 aa).

5 disordered regions span residues 1–52 (MSEE…HGSK), 129–181 (HDHS…PTKI), 203–247 (KRRA…SSNS), 547–619 (KPVP…SISG), and 657–766 (SVTP…KVKM). Composition is skewed to low complexity over residues 8–19 (SAPAPASTPAPA) and 134–147 (NDAN…TNDD). The DNA-binding element occupies 64–186 (IFIHKLYQIL…NPTKIWEFKH (123 aa)). The span at 171–181 (QEKEKSNPTKI) shows a compositional bias: basic and acidic residues. Positions 208 to 224 (SRNNSSINSRKNSSNQN) are enriched in low complexity. Ser-220 is subject to Phosphoserine. Residues 236–247 (SSIQDPSTSSNS) show a composition bias toward polar residues. At Ser-556 the chain carries Phosphoserine. Over residues 679–699 (AVSSNLINSPMNVEHSSSLSQ) the composition is skewed to polar residues. Low complexity predominate over residues 708-719 (LPQPSLPTTSTT). A Phosphoserine modification is found at Ser-733. Residues 738 to 750 (LLNQEDSSTSSAD) show a composition bias toward polar residues.

The protein in the N-terminal section; belongs to the HSF family.

The protein localises to the nucleus. Involved in cell surface assembly and regulation of the gene related to flocculation (asexual cell aggregation). Mutations in SFL1 causes constitutive cell aggregation. The polypeptide is Flocculation suppression protein (SFL1) (Saccharomyces cerevisiae (strain ATCC 204508 / S288c) (Baker's yeast)).